The following is a 377-amino-acid chain: Nitric oxide reductase FlRd-NAD(+) reductase (377 aa).

The protein belongs to the FAD-dependent oxidoreductase family. FAD serves as cofactor.

The protein localises to the cytoplasm. The catalysed reaction is 2 reduced [nitric oxide reductase rubredoxin domain] + NAD(+) + H(+) = 2 oxidized [nitric oxide reductase rubredoxin domain] + NADH. Its pathway is nitrogen metabolism; nitric oxide reduction. One of at least two accessory proteins for anaerobic nitric oxide (NO) reductase. Reduces the rubredoxin moiety of NO reductase. The chain is Nitric oxide reductase FlRd-NAD(+) reductase from Salmonella dublin (strain CT_02021853).